The chain runs to 148 residues: Endoribonuclease YbeY (148 aa).

Residues His113, His117, and His123 each contribute to the Zn(2+) site.

The protein belongs to the endoribonuclease YbeY family. Zn(2+) serves as cofactor.

Its subcellular location is the cytoplasm. Functionally, single strand-specific metallo-endoribonuclease involved in late-stage 70S ribosome quality control and in maturation of the 3' terminus of the 16S rRNA. This is Endoribonuclease YbeY from Borrelia hermsii (strain HS1 / DAH).